Consider the following 584-residue polypeptide: MFS-type transporter gkaD (584 aa).

Residues 1–11 are compositionally biased toward low complexity; sequence MAVDTETTTTT. Positions 1–60 are disordered; sequence MAVDTETTTTTIPVTDSDRIDDQNNLTSNAIPHASEKTVPDSPASEQNEVSDESEDKPSK. A glycan (N-linked (GlcNAc...) asparagine) is linked at Asn-25. The next 8 membrane-spanning stretches (helical) occupy residues 65 to 85, 99 to 119, 134 to 154, 167 to 187, 196 to 216, 223 to 243, 262 to 282, and 293 to 313; these read FGFYAIIVALALTSLLTSLEA, LGGASLYVWVVNGYYLTQTAF, WPMICSAAMFTIGSGVAGGSK, GIGSGGILVLTEIIICDLLPL, MIVSLVGIGAALGPLFGGLIV, WVFYLNVPIGGVACLMLFFFL, WIGNVLFVMSMVSILIALSWA, and VVVPLVLGFVGSAAFVVYEGS. Asn-328 carries an N-linked (GlcNAc...) asparagine glycan. Helical transmembrane passes span 334 to 354, 369 to 389, 398 to 418, 425 to 445, 462 to 482, and 536 to 556; these read AFAVTFLHTLSSVSVMYFLPV, VQLLPTILFMIPGAIAGGTLL, LQHGGLAFMIIGFGLLTLLDA, WVGYQLLGALGTGLALPVLLP, TWSFMRTYGFIWGATIATAVF, and LNVVWYVSLAFAGLGFLLVFL.

It belongs to the major facilitator superfamily.

Its subcellular location is the membrane. Functionally, MFS-type transporter; part of the gene cluster that mediates the biosynthesis of GKK1032, fungal natural products containing a macrocyclic para-cyclophane connected to a decahydrofluorene ring system that show potent antitumor activities. The sequence is that of MFS-type transporter gkaD from Penicillium citrinum.